Reading from the N-terminus, the 154-residue chain is Fibroblast growth factor 2 (154 aa).

A propeptide spanning residues 1–9 (MAAGSITSL) is cleaved from the precursor. The interval 1–20 (MAAGSITSLPALPEDGGGAF) is disordered. Heparin is bound at residue asparagine 35. The residue at position 81 (tyrosine 81) is a Phosphotyrosine; by TEC. Residue lysine 94 forms a Glycyl lysine isopeptide (Lys-Gly) (interchain with G-Cter in SUMO1) linkage. Residues 127-143 (KRTGQYKLGSKTGPGQK) are heparin-binding.

Belongs to the heparin-binding growth factors family. Monomer. Homodimer. Interacts with FGFR1, FGFR2, FGFR3 and FGFR4. Affinity between fibroblast growth factors (FGFs) and their receptors is increased by heparan sulfate glycosaminoglycans that function as coreceptors. Interacts with CSPG4, FGFBP1 and TEC. Found in a complex with FGFBP1, FGF1 and FGF2. Interacts with FGFBP3. Interacts with integrin ITGAV:ITGB3; the interaction is required for FGF2 signaling. Interacts with SNORC (via the extracellular domain). Interacts with GPC3. In terms of processing, phosphorylation at Tyr-81 regulates FGF2 unconventional secretion. Found in all tissues examined.

It is found in the secreted. Its subcellular location is the nucleus. Functionally, acts as a ligand for FGFR1, FGFR2, FGFR3 and FGFR4. Also acts as an integrin ligand which is required for FGF2 signaling. Binds to integrin ITGAV:ITGB3. Plays an important role in the regulation of cell survival, cell division, cell differentiation and cell migration. Functions as a potent mitogen in vitro. Can induce angiogenesis. Mediates phosphorylation of ERK1/2 and thereby promotes retinal lens fiber differentiation. The sequence is that of Fibroblast growth factor 2 (Fgf2) from Rattus norvegicus (Rat).